We begin with the raw amino-acid sequence, 472 residues long: Deoxyribodipyrimidine photo-lyase (472 aa).

Positions Thr-2–Ile-134 constitute a Photolyase/cryptochrome alpha/beta domain. Residues Asn-109 and Glu-110 each contribute to the (6R)-5,10-methylene-5,6,7,8-tetrahydrofolate site. FAD is bound at residue Tyr-223. Arg-227 lines the DNA pocket. Residues Thr-235–Ser-239, Trp-272, and Glu-275–Tyr-282 each bind FAD. 2 interaction with DNA regions span residues Glu-275–Tyr-282 and Asn-342–Arg-343. Residue Asp-373–Asp-375 coordinates FAD. Gln-405 contributes to the DNA binding site.

The protein belongs to the DNA photolyase class-1 family. Monomer. It depends on FAD as a cofactor. The cofactor is (6R)-5,10-methylene-5,6,7,8-tetrahydrofolate.

The enzyme catalyses cyclobutadipyrimidine (in DNA) = 2 pyrimidine residues (in DNA).. Its function is as follows. Involved in repair of UV radiation-induced DNA damage. Catalyzes the light-dependent monomerization (300-600 nm) of cyclobutyl pyrimidine dimers (in cis-syn configuration), which are formed between adjacent bases on the same DNA strand upon exposure to ultraviolet radiation. This is Deoxyribodipyrimidine photo-lyase (phrB) from Escherichia coli (strain K12).